The following is a 144-amino-acid chain: Superoxide dismutase [Mn] (144 aa).

Residues 1-22 (GYVNGLESAEETLAENRESGDF) form a disordered region. Histidine 42, aspartate 124, and histidine 128 together coordinate Mn(2+).

The protein belongs to the iron/manganese superoxide dismutase family. Requires Mn(2+) as cofactor.

It catalyses the reaction 2 superoxide + 2 H(+) = H2O2 + O2. In terms of biological role, destroys superoxide anion radicals which are normally produced within the cells and which are toxic to biological systems. The protein is Superoxide dismutase [Mn] (sod) of Haloarcula hispanica.